The chain runs to 628 residues: Phosphomethylpyrimidine synthase (628 aa).

The disordered stretch occupies residues 1–22 (MSKQEKTINLSESAQVDQQSVQ). Polar residues predominate over residues 7 to 22 (TINLSESAQVDQQSVQ). Residues Asn232, Met261, Tyr290, His326, 346–348 (SRG), 387–390 (DGLR), and Glu426 each bind substrate. His430 lines the Zn(2+) pocket. Residue Tyr453 participates in substrate binding. His494 serves as a coordination point for Zn(2+). [4Fe-4S] cluster-binding residues include Cys574, Cys577, and Cys582.

Belongs to the ThiC family. In terms of assembly, homodimer. The cofactor is [4Fe-4S] cluster.

It carries out the reaction 5-amino-1-(5-phospho-beta-D-ribosyl)imidazole + S-adenosyl-L-methionine = 4-amino-2-methyl-5-(phosphooxymethyl)pyrimidine + CO + 5'-deoxyadenosine + formate + L-methionine + 3 H(+). It functions in the pathway cofactor biosynthesis; thiamine diphosphate biosynthesis. Its function is as follows. Catalyzes the synthesis of the hydroxymethylpyrimidine phosphate (HMP-P) moiety of thiamine from aminoimidazole ribotide (AIR) in a radical S-adenosyl-L-methionine (SAM)-dependent reaction. The polypeptide is Phosphomethylpyrimidine synthase (Pseudomonas putida (strain W619)).